Consider the following 138-residue polypeptide: ATP synthase epsilon chain (138 aa).

This sequence belongs to the ATPase epsilon chain family. As to quaternary structure, F-type ATPases have 2 components, CF(1) - the catalytic core - and CF(0) - the membrane proton channel. CF(1) has five subunits: alpha(3), beta(3), gamma(1), delta(1), epsilon(1). CF(0) has three main subunits: a, b and c.

It localises to the cellular thylakoid membrane. In terms of biological role, produces ATP from ADP in the presence of a proton gradient across the membrane. The sequence is that of ATP synthase epsilon chain from Cyanothece sp. (strain PCC 7425 / ATCC 29141).